Here is a 280-residue protein sequence, read N- to C-terminus: Manganese transport system membrane protein MntC (280 aa).

9 consecutive transmembrane segments (helical) span residues 16–36, 41–61, 62–82, 92–112, 137–157, 168–188, 193–213, 221–241, and 244–264; these read ALIT…FIIL, LMGD…YMMG, MNFF…IGFV, TAIG…ISFA, TIII…EFLV, YGLN…LVTV, TVGI…AYLL, IMLA…FSYI, and LASG…AFLF.

Belongs to the ABC-3 integral membrane protein family.

It is found in the cell membrane. Its function is as follows. This protein is probably a component of a manganese permease, a binding protein-dependent, ATP-driven transport system. This chain is Manganese transport system membrane protein MntC (mntC), found in Listeria innocua serovar 6a (strain ATCC BAA-680 / CLIP 11262).